Consider the following 100-residue polypeptide: Urease subunit gamma (100 aa).

Belongs to the urease gamma subunit family. In terms of assembly, heterotrimer of UreA (gamma), UreB (beta) and UreC (alpha) subunits. Three heterotrimers associate to form the active enzyme.

The protein resides in the cytoplasm. It catalyses the reaction urea + 2 H2O + H(+) = hydrogencarbonate + 2 NH4(+). It functions in the pathway nitrogen metabolism; urea degradation; CO(2) and NH(3) from urea (urease route): step 1/1. The protein is Urease subunit gamma of Synechococcus sp. (strain WH7805).